Consider the following 314-residue polypeptide: uncharacterized protein (314 aa).

The signal sequence occupies residues 1-20; the sequence is MKKRAGIWAALLLAAVMLAG. The N-palmitoyl cysteine moiety is linked to residue Cys-21. Cys-21 is lipidated: S-diacylglycerol cysteine. The Fe/B12 periplasmic-binding domain occupies 59-311; it reads KIVSLMPSNT…ELAESIYPDT (253 aa).

Belongs to the bacterial solute-binding protein 8 family. As to quaternary structure, the complex is composed of two ATP-binding proteins (YvrA), two transmembrane proteins (YvrB) and a solute-binding protein (YvrC).

Its subcellular location is the cell membrane. Functionally, probably part of an ABC transporter complex. This is an uncharacterized protein from Bacillus subtilis (strain 168).